The sequence spans 260 residues: ProSAAS (260 aa).

Positions 1 to 33 (MAGSPLLCGPRAGGVGLLVLLLLGLLRLPPTLS) are cleaved as a signal peptide. A proSAAS(1-180) region spans residues 34 to 215 (ARPVKEPRSL…SSEPEAAPAP (182 aa)). Disordered regions lie at residues 162–187 (AALRPRPPVYDDGPTGPDVEDAADET) and 206–234 (SSEPEAAPAPRRLRRAVDQDLGPEVPPEN). The segment at 221-260 (AVDQDLGPEVPPENVLGALLRVKRLENSSPQAPARRLLPP) is C-terminal inhibitory domain; interacts with PCSK1. The Sufficient for inhibition of PCSK1 motif lies at 239–244 (LLRVKR).

As to quaternary structure, interacts via the C-terminal inhibitory domain with PCSK1 65 kDa form. In terms of processing, proteolytically cleaved in the Golgi. Big SAAS, Little SAAS, PEN and Big LEN are the major processed peptides in proSAAS-overexpressing PC-12 phaeochromocytoma cells (lacking PCSK1 and PCSK2 endopeptidases). Peptides corresponding to PEN and a proSAAS aa 40-59 have been detected in wild-type PC-12 cells. Expressed in adult brain (all major structural regions), adrenal gland (medulla) and spinal cord (dorsal and ventral horn). Expressed in pancreatic islands.

The protein localises to the secreted. It localises to the golgi apparatus. It is found in the trans-Golgi network. In terms of biological role, may function in the control of the neuroendocrine secretory pathway. Proposed be a specific endogenous inhibitor of PCSK1. ProSAAS and Big PEN-LEN, both containing the C-terminal inhibitory domain, but not the processed peptides reduce PCSK1 activity in the endoplasmic reticulum and Golgi. It reduces the activity of the 87 kDa form but not the autocatalytically derived 65 kDa form of PCSK1. Subsequent processing of proSAAS may eliminate the inhibition. Slows down convertase-mediated processing of proopiomelanocortin and proenkephalin. May control the intracellular timing of PCSK1 rather than its total level of activity. Endogenous ligand for GPR171. Neuropeptide involved in the regulation of feeding. In Rattus norvegicus (Rat), this protein is ProSAAS (Pcsk1n).